We begin with the raw amino-acid sequence, 201 residues long: MSTEAQRVDDSPSTSGGSSDGDQRESVQQEPEREQVQPKKKEGKISSKTAAKLSTSAKRIQKELAEITLDPPPNCSAGPKGDNIYEWRSTILGPPGSVYEGGVFFLDITFSPDYPFKPPKVTFRTRIYHCNINSQGVICLDILKDNWSPALTISKVLLSICSLLTDCNPADPLVGSIATQYMTNRAEHDRMARQWTKRYAT.

Basic and acidic residues predominate over residues 1–10 (MSTEAQRVDD). Positions 1–55 (MSTEAQRVDDSPSTSGGSSDGDQRESVQQEPEREQVQPKKKEGKISSKTAAKLST) are disordered. At serine 2 the chain carries N-acetylserine. 4 positions are modified to phosphoserine: serine 11, serine 15, serine 18, and serine 19. Residues 21–45 (GDQRESVQQEPEREQVQPKKKEGKI) are compositionally biased toward basic and acidic residues. Low complexity predominate over residues 46–55 (SSKTAAKLST). The 147-residue stretch at 55-201 (TSAKRIQKEL…ARQWTKRYAT (147 aa)) folds into the UBC core domain. Cysteine 139 acts as the Glycyl thioester intermediate in catalysis.

Belongs to the ubiquitin-conjugating enzyme family. Post-translationally, autoubiquitinated in vitro.

It catalyses the reaction S-ubiquitinyl-[E1 ubiquitin-activating enzyme]-L-cysteine + [E2 ubiquitin-conjugating enzyme]-L-cysteine = [E1 ubiquitin-activating enzyme]-L-cysteine + S-ubiquitinyl-[E2 ubiquitin-conjugating enzyme]-L-cysteine.. It participates in protein modification; protein ubiquitination. Functionally, accepts ubiquitin from the E1 complex and catalyzes its covalent attachment to other proteins. In vitro catalyzes 'Lys-11'- and 'Lys-48'-, as well as 'Lys-63'-linked polyubiquitination. Catalyzes the ISGylation of influenza A virus NS1 protein. The sequence is that of Ubiquitin-conjugating enzyme E2 E2 from Homo sapiens (Human).